Reading from the N-terminus, the 347-residue chain is N-acetyl-gamma-glutamyl-phosphate reductase (347 aa).

The active site involves C151.

The protein belongs to the NAGSA dehydrogenase family. Type 1 subfamily.

Its subcellular location is the cytoplasm. It catalyses the reaction N-acetyl-L-glutamate 5-semialdehyde + phosphate + NADP(+) = N-acetyl-L-glutamyl 5-phosphate + NADPH + H(+). It participates in amino-acid biosynthesis; L-arginine biosynthesis; N(2)-acetyl-L-ornithine from L-glutamate: step 3/4. Its function is as follows. Catalyzes the NADPH-dependent reduction of N-acetyl-5-glutamyl phosphate to yield N-acetyl-L-glutamate 5-semialdehyde. The protein is N-acetyl-gamma-glutamyl-phosphate reductase of Corynebacterium aurimucosum (strain ATCC 700975 / DSM 44827 / CIP 107346 / CN-1) (Corynebacterium nigricans).